The primary structure comprises 392 residues: Formate-dependent phosphoribosylglycinamide formyltransferase (392 aa).

N(1)-(5-phospho-beta-D-ribosyl)glycinamide-binding positions include 22–23 and glutamate 82; that span reads EL. ATP contacts are provided by residues arginine 114, lysine 155, 160 to 165, 195 to 198, and glutamate 203; these read SSGKGQ and EGVV. An ATP-grasp domain is found at 119–308; that stretch reads RLAAEELQLP…EFALHVRAFL (190 aa). The Mg(2+) site is built by glutamate 267 and glutamate 279. N(1)-(5-phospho-beta-D-ribosyl)glycinamide contacts are provided by residues aspartate 286, lysine 355, and 362-363; that span reads RR.

It belongs to the PurK/PurT family. In terms of assembly, homodimer.

The catalysed reaction is N(1)-(5-phospho-beta-D-ribosyl)glycinamide + formate + ATP = N(2)-formyl-N(1)-(5-phospho-beta-D-ribosyl)glycinamide + ADP + phosphate + H(+). Its pathway is purine metabolism; IMP biosynthesis via de novo pathway; N(2)-formyl-N(1)-(5-phospho-D-ribosyl)glycinamide from N(1)-(5-phospho-D-ribosyl)glycinamide (formate route): step 1/1. Its function is as follows. Involved in the de novo purine biosynthesis. Catalyzes the transfer of formate to 5-phospho-ribosyl-glycinamide (GAR), producing 5-phospho-ribosyl-N-formylglycinamide (FGAR). Formate is provided by PurU via hydrolysis of 10-formyl-tetrahydrofolate. The polypeptide is Formate-dependent phosphoribosylglycinamide formyltransferase (Klebsiella pneumoniae (strain 342)).